Consider the following 423-residue polypeptide: GTPase ERA-like, chloroplastic (423 aa).

A chloroplast-targeting transit peptide spans 1–60; sequence MELGLALRLVAPPPRLPCRALQPPPMPCFSPCAARRSRIRSSRLERRVGVVVSGGSMASL. In terms of domain architecture, Era-type G spans 124 to 294; it reads RSGYVAVLGK…KEWILSKLPL (171 aa). The segment at 132–139 is G1; the sequence is GKPNVGKS. 132-139 contacts GTP; it reads GKPNVGKS. A G2 region spans residues 158–162; the sequence is QTTRH. The segment at 179–182 is G3; the sequence is DTPG. GTP contacts are provided by residues 179–183 and 244–247; these read DTPGV and NKKD. Residues 244-247 are G4; that stretch reads NKKD. A G5 region spans residues 273–275; it reads ISA. Residues 325–402 form the KH type-2 domain; it reads YRQEIPYACQ…YLEIMVKVKE (78 aa).

The protein belongs to the TRAFAC class TrmE-Era-EngA-EngB-Septin-like GTPase superfamily. Era GTPase family.

The protein resides in the plastid. It localises to the chloroplast stroma. It is found in the chloroplast nucleoid. Nuclear genome-encoded probable GTPase involved in ribosome biogenesis in chloroplasts. Plays a role in 16S rRNA maturation in plastids and may contribute to the assembly of the small (30S) ribosomal subunit. This is GTPase ERA-like, chloroplastic from Oryza sativa subsp. japonica (Rice).